The sequence spans 427 residues: Adenylosuccinate synthetase (427 aa).

GTP contacts are provided by residues 12-18 (GDEGKGK) and 40-42 (GHT). Asp-13 acts as the Proton acceptor in catalysis. Mg(2+) is bound by residues Asp-13 and Gly-40. IMP-binding positions include 13–16 (DEGK), 38–41 (NAGH), Thr-128, Arg-142, Gln-223, Thr-238, and Arg-302. The active-site Proton donor is His-41. 298-304 (TVTGRAR) provides a ligand contact to substrate. GTP-binding positions include Arg-304, 330–332 (RLD), and 412–414 (SVG).

It belongs to the adenylosuccinate synthetase family. Homodimer. The cofactor is Mg(2+).

Its subcellular location is the cytoplasm. The catalysed reaction is IMP + L-aspartate + GTP = N(6)-(1,2-dicarboxyethyl)-AMP + GDP + phosphate + 2 H(+). It functions in the pathway purine metabolism; AMP biosynthesis via de novo pathway; AMP from IMP: step 1/2. Functionally, plays an important role in the de novo pathway of purine nucleotide biosynthesis. Catalyzes the first committed step in the biosynthesis of AMP from IMP. The chain is Adenylosuccinate synthetase from Brachyspira hyodysenteriae (strain ATCC 49526 / WA1).